The following is a 726-amino-acid chain: Mitotic spindle checkpoint protein MAD1 (726 aa).

The interval 1–30 is disordered; sequence MILRTPQPKRLRSDAGESPFPTGATGSGNQ. Coiled coils occupy residues 68-246 and 272-625; these read ADVL…LKLI and SDNS…VFAD.

It belongs to the MAD1 family. Homodimer. Part of the mitotic checkpoint complex (MCC). Interacts with MAD2 and NUA.

It is found in the nucleus envelope. Required for the execution of the mitotic checkpoint which monitors the process of kinetochore-spindle attachment and delays the onset of anaphase when this process is not complete. It inhibits the activity of the anaphase promoting complex by sequestering CDC20 until all chromosomes are aligned at the metaphase plate. Required for anchoring MAD2 to the nuclear envelope. In Arabidopsis thaliana (Mouse-ear cress), this protein is Mitotic spindle checkpoint protein MAD1.